The primary structure comprises 1190 residues: Phosphatidylinositol-3,5-bisphosphate 3-phosphatase MTMR4 (1190 aa).

The residue at position 8 (Ser-8) is a Phosphoserine. The Myotubularin phosphatase domain occupies 153-570 (EHIRCRQEAE…RALHLWTAVY (418 aa)). Positions 320, 345, and 346 each coordinate a 1,2-diacyl-sn-glycero-3-phospho-(1D-myo-inositol-3,5-bisphosphate). A 1,2-diacyl-sn-glycero-3-phospho-(1D-myo-inositol-3-phosphate) is bound by residues Asn-320, Asn-345, and Ile-346. Cys-407 (phosphocysteine intermediate) is an active-site residue. A 1,2-diacyl-sn-glycero-3-phospho-(1D-myo-inositol-3,5-bisphosphate) contacts are provided by Ser-408, Asp-409, Gly-410, Trp-411, Asp-412, Arg-413, Lys-449, and Arg-453. 6 residues coordinate a 1,2-diacyl-sn-glycero-3-phospho-(1D-myo-inositol-3-phosphate): Ser-408, Asp-409, Gly-410, Trp-411, Asp-412, and Arg-413. Residue Arg-453 coordinates a 1,2-diacyl-sn-glycero-3-phospho-(1D-myo-inositol-3-phosphate). Residues Ser-610 and Ser-629 each carry the phosphoserine modification. 3 disordered regions span residues 616–694 (SACD…FKGH), 724–749 (ETEA…GKPP), and 773–848 (DFPE…PSSV). The span at 618-637 (CDTSSPLTRTSSDPNLNNHS) shows a compositional bias: polar residues. The segment covering 782-847 (LTGTPQQPHL…SISHQEQPSS (66 aa)) has biased composition (polar residues). The short motif at 999 to 1003 (VPPLY) is the PY-motif; substrate motif for NEDD4 element. A coiled-coil region spans residues 1020-1052 (LRQIEAGYRQEVEQLRRQVRELQMRLDIRHCCA). Residues 1109–1169 (DHMASHCFNC…VCNSCYEHIQ (61 aa)) form an FYVE-type zinc finger. Cys-1115, Cys-1118, Cys-1131, Cys-1134, Cys-1139, Cys-1142, Cys-1161, and Cys-1164 together coordinate Zn(2+).

It belongs to the protein-tyrosine phosphatase family. Non-receptor class myotubularin subfamily. As to quaternary structure, homooligomeric. Forms MTMR3:MTMR4 heterooligomers; regulates the localization of both proteins. The MTMR3:MTMR4 heterooligomer can also recruit both CEP55 and PLK1; occurs during early mitosis, regulates the phosphorylation of CEP55 by PLK1 and its recruitment to the midbody where it can mediate cell abscission. Interacts with SMAD2 and SMAD3; negatively regulates TGF-beta signaling through SMAD2 and SMAD3 dephosphorylation and retention in endosomes. Interacts with SMAD1; negatively regulates BMP signaling through SMAD1 dephosphorylation and retention in endosomes. Ubiquitinated. Ubiquitination by NEDD4 probably leads to proteasomal degradation. Post-translationally, phosphorylated by CDK1 during mitosis.

It is found in the early endosome membrane. It localises to the recycling endosome membrane. The protein localises to the late endosome membrane. The protein resides in the cytoplasmic vesicle. Its subcellular location is the phagosome membrane. The enzyme catalyses a 1,2-diacyl-sn-glycero-3-phospho-(1D-myo-inositol-3-phosphate) + H2O = a 1,2-diacyl-sn-glycero-3-phospho-(1D-myo-inositol) + phosphate. It catalyses the reaction a 1,2-diacyl-sn-glycero-3-phospho-(1D-myo-inositol-3,5-bisphosphate) + H2O = a 1,2-diacyl-sn-glycero-3-phospho-(1D-myo-inositol-5-phosphate) + phosphate. The catalysed reaction is 1,2-dioctanoyl-sn-glycero-3-phospho-(1-D-myo-inositol-3-phosphate) + H2O = 1,2-dioctanoyl-sn-glycero-3-phospho-(1D-myo-inositol) + phosphate. It carries out the reaction 1,2-dioctanoyl-sn-glycero-3-phospho-(1D-myo-inositol-3,5-bisphosphate) + H2O = 1,2-dioctanoyl-sn-glycero-3-phospho-(1D-myo-inositol-5-phosphate) + phosphate. Functionally, lipid phosphatase that specifically dephosphorylates the D-3 position of phosphatidylinositol 3-phosphate and phosphatidylinositol 3,5-bisphosphate, generating phosphatidylinositol and phosphatidylinositol 5-phosphate. Decreases the levels of phosphatidylinositol 3-phosphate, a phospholipid found in cell membranes where it acts as key regulator of both cell signaling and intracellular membrane traffic, in a subset of endosomal membranes to negatively regulate both endocytic recycling and trafficking and/or maturation of endosomes toward lysosomes. Through phosphatidylinositol 3-phosphate turnover in phagosome membranes regulates phagocytosis and phagosome maturation. By decreasing phosphatidylinositol 3-monophosphate (PI3P) levels in immune cells it can also regulate the innate immune response. Beside its lipid phosphatase activity, can also function as a molecular adapter to regulate midbody abscission during mitotic cytokinesis. Can also negatively regulate TGF-beta and BMP signaling through Smad proteins dephosphorylation and retention in endosomes. In Mus musculus (Mouse), this protein is Phosphatidylinositol-3,5-bisphosphate 3-phosphatase MTMR4.